The following is a 670-amino-acid chain: UvrABC system protein B (670 aa).

The 158-residue stretch at 26 to 183 folds into the Helicase ATP-binding domain; that stretch reads EGLEDGLAHQ…RRLAELQYAR (158 aa). Position 39-46 (39-46) interacts with ATP; the sequence is GVTGSGKT. Residues 92-115 carry the Beta-hairpin motif; sequence YYDYYQPEAYVPSSDTFIEKDAAV. One can recognise a Helicase C-terminal domain in the interval 431–597; sequence QVDDLLSEIR…GLNKKVSDVL (167 aa). The 36-residue stretch at 630–665 folds into the UVR domain; sequence DQKIRELEAQMYTHAQNLEFELAAGLRDEIHQLREQ.

It belongs to the UvrB family. In terms of assembly, forms a heterotetramer with UvrA during the search for lesions. Interacts with UvrC in an incision complex.

It localises to the cytoplasm. Functionally, the UvrABC repair system catalyzes the recognition and processing of DNA lesions. A damage recognition complex composed of 2 UvrA and 2 UvrB subunits scans DNA for abnormalities. Upon binding of the UvrA(2)B(2) complex to a putative damaged site, the DNA wraps around one UvrB monomer. DNA wrap is dependent on ATP binding by UvrB and probably causes local melting of the DNA helix, facilitating insertion of UvrB beta-hairpin between the DNA strands. Then UvrB probes one DNA strand for the presence of a lesion. If a lesion is found the UvrA subunits dissociate and the UvrB-DNA preincision complex is formed. This complex is subsequently bound by UvrC and the second UvrB is released. If no lesion is found, the DNA wraps around the other UvrB subunit that will check the other stand for damage. The chain is UvrABC system protein B from Serratia proteamaculans (strain 568).